The chain runs to 1969 residues: Echinoderm microtubule-associated protein-like 5 (1969 aa).

10 WD repeats span residues 59–100 (GHSD…TISV), 104–145 (VHTH…MLSM), 148–187 (GHTD…LTPK), 195–233 (GDLQ…RTIQ), 235–273 (AHAA…TVID), 280–321 (GYKG…LIMQ), 323–362 (HCEG…LIAR), 406–445 (DRKE…KKVG), 449–488 (GSLS…EVTS), and 561–601 (GHSA…KLKD). A disordered region spans residues 609-633 (ESLADSHSDESDSDLSDVPELDSEI). The span at 619 to 633 (SDSDLSDVPELDSEI) shows a compositional bias: acidic residues. WD repeat units lie at residues 725–766 (GHDD…PLSI), 770–811 (HHQY…KLSI), 814–853 (GSKD…LIGR), 861–900 (GKND…KTVK), 901–940 (AHDG…KTYA), 996–1035 (HMEG…CMLA), 1038–1077 (KLKK…DLVS), 1080–1120 (HRKD…RVGI), and 1236–1276 (AHST…YREK). Disordered stretches follow at residues 1274–1297 (REKR…YDSD) and 1326–1355 (QQKE…NVGK). The segment covering 1281 to 1294 (SEESDIDSEEDGGY) has biased composition (acidic residues). Basic and acidic residues predominate over residues 1326 to 1337 (QQKEPSIDERPP). WD repeat units follow at residues 1412–1463 (EHND…TLSI), 1467–1508 (YHSK…KIAS), 1511–1550 (GHNQ…LLSK), 1560–1598 (ARMQ…RIVA), 1600–1646 (AHNG…RAFR), 1691–1731 (GHVD…MLNK), 1733–1774 (NLGH…GKKR), 1775–1814 (DRRC…TLNR), 1887–1926 (AEKA…KFAK), and 1932–1969 (GHSP…HTPH).

It belongs to the WD repeat EMAP family.

The protein resides in the cytoplasm. It localises to the cytoskeleton. May modify the assembly dynamics of microtubules, such that microtubules are slightly longer, but more dynamic. In Homo sapiens (Human), this protein is Echinoderm microtubule-associated protein-like 5 (EML5).